We begin with the raw amino-acid sequence, 144 residues long: 3-hydroxyacyl-[acyl-carrier-protein] dehydratase FabZ (144 aa).

The active site involves His-48.

Belongs to the thioester dehydratase family. FabZ subfamily.

Its subcellular location is the cytoplasm. The enzyme catalyses a (3R)-hydroxyacyl-[ACP] = a (2E)-enoyl-[ACP] + H2O. In terms of biological role, involved in unsaturated fatty acids biosynthesis. Catalyzes the dehydration of short chain beta-hydroxyacyl-ACPs and long chain saturated and unsaturated beta-hydroxyacyl-ACPs. The chain is 3-hydroxyacyl-[acyl-carrier-protein] dehydratase FabZ from Listeria monocytogenes serotype 4b (strain CLIP80459).